A 626-amino-acid chain; its full sequence is Serine/threonine-protein kinase PknB (626 aa).

Over 1-332 (MTTPSHLSDR…DRSIGSVGRW (332 aa)) the chain is Cytoplasmic. One can recognise a Protein kinase domain in the interval 11–274 (YELGEILGFG…TAAEMRADLV (264 aa)). ATP is bound by residues 17–25 (LGFGGMSEV), Lys-40, and 93–95 (EYV). The active-site Proton acceptor is Asp-138. ATP-binding positions include 140-143 (KPAN) and Asp-156. Residues Asn-143 and Asp-156 each contribute to the Mg(2+) site. Phosphoserine; by autocatalysis occurs at positions 166 and 169. 3 positions are modified to phosphothreonine; by autocatalysis: Thr-171, Thr-173, and Thr-294. A Phosphoserine; by autocatalysis modification is found at Ser-295. The segment at 299 to 323 (SAAGNLSGPRTDPLPRQDLDDTDRD) is disordered. Position 309 is a phosphothreonine; by autocatalysis (Thr-309). Basic and acidic residues predominate over residues 311–323 (PLPRQDLDDTDRD). The helical transmembrane segment at 333 to 353 (VAVVAVLAVLTVVVTIAINTF) threads the bilayer. The Extracellular segment spans residues 354-626 (GGITRDVQVP…DGIITLRFGQ (273 aa)). 4 consecutive PASTA domains span residues 356 to 422 (ITRD…NVST), 423 to 490 (GPEQ…IVGS), 491 to 557 (GPAT…QVSK), and 558 to 626 (GNQF…RFGQ).

Belongs to the protein kinase superfamily. Ser/Thr protein kinase family. As to quaternary structure, homodimer. In terms of processing, autophosphorylated. Dephosphorylated by PstP.

The protein localises to the cell membrane. It carries out the reaction L-seryl-[protein] + ATP = O-phospho-L-seryl-[protein] + ADP + H(+). It catalyses the reaction L-threonyl-[protein] + ATP = O-phospho-L-threonyl-[protein] + ADP + H(+). Functionally, protein kinase that regulates many aspects of mycobacterial physiology. Is a key component of a signal transduction pathway that regulates cell growth, cell shape and cell division via phosphorylation of target proteins. The polypeptide is Serine/threonine-protein kinase PknB (pknB) (Mycobacterium bovis (strain ATCC BAA-935 / AF2122/97)).